The following is a 332-amino-acid chain: MKQVQTKRDWKKLAYDVVEEKMITKEDAIAILEADDTEVLEIMNAAYIIRHHHFGKKVKLNMIINTKSGLCPEDCGYCSQSIISEAPIDKYAWLTQEKIVEGAHEAIRRKAGTYCIVASGRRPTDKEVNHVIGAVKEIRETTDLKICCCLGFLNEDQAGRLAEAGVHRYNHNLDTHANNYDSICSTHTYDDRVDTVQKAKQAGISPCSGAIFGMGETIEERAEIAFELQRIDADSIPCNFLVAVKGTPLEGQKELTPVECLKVLAMMRFVNPTKEIRISGGREINLRSVQPIGLFAANSIFVGDYLTTAGQEPTADWGMIADLGFEIEECAL.

A Radical SAM core domain is found at histidine 53–arginine 282. The [4Fe-4S] cluster site is built by cysteine 71, cysteine 75, and cysteine 78. [2Fe-2S] cluster contacts are provided by cysteine 115, cysteine 147, cysteine 207, and arginine 277.

This sequence belongs to the radical SAM superfamily. Biotin synthase family. As to quaternary structure, homodimer. The cofactor is [4Fe-4S] cluster. [2Fe-2S] cluster is required as a cofactor.

It catalyses the reaction (4R,5S)-dethiobiotin + (sulfur carrier)-SH + 2 reduced [2Fe-2S]-[ferredoxin] + 2 S-adenosyl-L-methionine = (sulfur carrier)-H + biotin + 2 5'-deoxyadenosine + 2 L-methionine + 2 oxidized [2Fe-2S]-[ferredoxin]. Its pathway is cofactor biosynthesis; biotin biosynthesis; biotin from 7,8-diaminononanoate: step 2/2. Catalyzes the conversion of dethiobiotin (DTB) to biotin by the insertion of a sulfur atom into dethiobiotin via a radical-based mechanism. The sequence is that of Biotin synthase from Bacillus cereus (strain ATCC 14579 / DSM 31 / CCUG 7414 / JCM 2152 / NBRC 15305 / NCIMB 9373 / NCTC 2599 / NRRL B-3711).